Consider the following 274-residue polypeptide: MQFSKMHGLGNDFVVVDAITQNLYFSPETIKRLADRHRGIGFDQMLIVEPPYDPDLDFHYRIFNADGSEVSQCGNGARCFARFVTLKGLTDKKDIAVSTQTGKMILSIKDDGMIRINMGEPIWEPAKIPFTANKFEKNYILRTSIQTVLCGAVSMGNPHCVVQVDDIQTANVEQLGPLLENHERFPERVNAGFMQVIHRGHIKLRVYERGAGETQACGSGACAAVAVGVMQGLLDSKVQVDLPGGSLIIEWEGVGKPLFMTGDATHVYDGVIRL.

Residues Asn-11, Gln-44, and Asn-64 each coordinate substrate. Cys-73 functions as the Proton donor in the catalytic mechanism. Residues 74-75 (GN), Asn-157, Asn-190, and 208-209 (ER) each bind substrate. Cys-217 serves as the catalytic Proton acceptor. Residue 218–219 (GS) coordinates substrate.

This sequence belongs to the diaminopimelate epimerase family. As to quaternary structure, homodimer.

Its subcellular location is the cytoplasm. The enzyme catalyses (2S,6S)-2,6-diaminopimelate = meso-2,6-diaminopimelate. Its pathway is amino-acid biosynthesis; L-lysine biosynthesis via DAP pathway; DL-2,6-diaminopimelate from LL-2,6-diaminopimelate: step 1/1. In terms of biological role, catalyzes the stereoinversion of LL-2,6-diaminopimelate (L,L-DAP) to meso-diaminopimelate (meso-DAP), a precursor of L-lysine and an essential component of the bacterial peptidoglycan. In Pasteurella multocida (strain Pm70), this protein is Diaminopimelate epimerase.